We begin with the raw amino-acid sequence, 489 residues long: Alpha-amylase (489 aa).

A signal peptide spans 1 to 16 (HFKPILVLCLATLALG). C44 and C102 are oxidised to a cystine. Ca(2+)-binding residues include N116, R164, and D173. C152 and C166 are disulfide-bonded. R201 contributes to the chloride binding site. D203 functions as the Nucleophile in the catalytic mechanism. Position 207 (H207) interacts with Ca(2+). The Proton donor role is filled by E240. The chloride site is built by N303 and R339. Disulfide bonds link C372–C378 and C443–C455.

Belongs to the glycosyl hydrolase 13 family. In terms of assembly, monomer. Ca(2+) is required as a cofactor. It depends on chloride as a cofactor.

The enzyme catalyses Endohydrolysis of (1-&gt;4)-alpha-D-glucosidic linkages in polysaccharides containing three or more (1-&gt;4)-alpha-linked D-glucose units.. This chain is Alpha-amylase, found in Tribolium castaneum (Red flour beetle).